The primary structure comprises 651 residues: Acid beta-fructofuranosidase (651 aa).

At 1–23 (MEHHKPLLPTSSHAAPNPRTRKD) the chain is on the cytoplasmic side. A propeptide spans 1–103 (MEHHKPLLPT…LFSGEGGASE (103 aa)) (removed in mature form). A helical; Signal-anchor for type II membrane protein membrane pass occupies residues 24 to 44 (LLLLLCALLFLSSLVAFGRNR). Over 45–651 (ASNVPHDHVS…PFPFNPDQKN (607 aa)) the chain is Lumenal. Positions 48–76 (VPHDHVSSSASNHQQEHQSPTSLPSSKWH) are disordered. Over residues 54-72 (SSSASNHQQEHQSPTSLPS) the composition is skewed to polar residues. Residues 127-130 (WMND), Q146, W154, and 189-190 (WT) contribute to the substrate site. D130 is an active-site residue. The N-linked (GlcNAc...) asparagine glycan is linked to N210. 253–254 (RD) is a substrate binding site. The N-linked (GlcNAc...) asparagine glycan is linked to N275. The substrate site is built by E308 and D343. A disulfide bond links C500 and C548. N-linked (GlcNAc...) asparagine glycosylation occurs at N620.

This sequence belongs to the glycosyl hydrolase 32 family. In terms of assembly, may be present in two forms, a 70 kDa monomer and a heterodimer of the 30 kDa and 38 kDa subunits. The ratio of the levels of the two forms within cells appears to be regulated developmentally.

It is found in the membrane. Its subcellular location is the vacuole lumen. The catalysed reaction is Hydrolysis of terminal non-reducing beta-D-fructofuranoside residues in beta-D-fructofuranosides.. Its pathway is glycan biosynthesis; sucrose metabolism. This is Acid beta-fructofuranosidase from Phaseolus vulgaris (Kidney bean).